A 168-amino-acid chain; its full sequence is 2-C-methyl-D-erythritol 2,4-cyclodiphosphate synthase (168 aa).

Residues Asp-13 and His-15 each contribute to the a divalent metal cation site. 4-CDP-2-C-methyl-D-erythritol 2-phosphate contacts are provided by residues 13 to 15 (DVH) and 39 to 40 (HS). His-47 provides a ligand contact to a divalent metal cation. 4-CDP-2-C-methyl-D-erythritol 2-phosphate contacts are provided by residues 61 to 63 (DIG), 66 to 70 (FPDTD), Phe-144, and Lys-147.

Belongs to the IspF family. Homotrimer. A divalent metal cation is required as a cofactor.

The catalysed reaction is 4-CDP-2-C-methyl-D-erythritol 2-phosphate = 2-C-methyl-D-erythritol 2,4-cyclic diphosphate + CMP. It functions in the pathway isoprenoid biosynthesis; isopentenyl diphosphate biosynthesis via DXP pathway; isopentenyl diphosphate from 1-deoxy-D-xylulose 5-phosphate: step 4/6. Functionally, involved in the biosynthesis of isopentenyl diphosphate (IPP) and dimethylallyl diphosphate (DMAPP), two major building blocks of isoprenoid compounds. Catalyzes the conversion of 4-diphosphocytidyl-2-C-methyl-D-erythritol 2-phosphate (CDP-ME2P) to 2-C-methyl-D-erythritol 2,4-cyclodiphosphate (ME-CPP) with a corresponding release of cytidine 5-monophosphate (CMP). This chain is 2-C-methyl-D-erythritol 2,4-cyclodiphosphate synthase, found in Cupriavidus metallidurans (strain ATCC 43123 / DSM 2839 / NBRC 102507 / CH34) (Ralstonia metallidurans).